Here is a 339-residue protein sequence, read N- to C-terminus: NADH-quinone oxidoreductase subunit H (339 aa).

9 consecutive transmembrane segments (helical) span residues 10 to 30, 50 to 70, 82 to 102, 115 to 135, 161 to 181, 187 to 207, 235 to 255, 275 to 295, and 310 to 330; these read FPLI…ILCV, PNVV…KLLF, ILFI…WAVV, VGVL…IIAG, MGLV…SGII, IPWW…ISVL, MGFA…SAMT, IPGF…FLWI, and LGWK…SSVL.

It belongs to the complex I subunit 1 family. In terms of assembly, NDH-1 is composed of 14 different subunits. Subunits NuoA, H, J, K, L, M, N constitute the membrane sector of the complex.

The protein resides in the cell inner membrane. The enzyme catalyses a quinone + NADH + 5 H(+)(in) = a quinol + NAD(+) + 4 H(+)(out). Its function is as follows. NDH-1 shuttles electrons from NADH, via FMN and iron-sulfur (Fe-S) centers, to quinones in the respiratory chain. The immediate electron acceptor for the enzyme in this species is believed to be ubiquinone. Couples the redox reaction to proton translocation (for every two electrons transferred, four hydrogen ions are translocated across the cytoplasmic membrane), and thus conserves the redox energy in a proton gradient. This subunit may bind ubiquinone. The sequence is that of NADH-quinone oxidoreductase subunit H from Rickettsia canadensis (strain McKiel).